Reading from the N-terminus, the 365-residue chain is UDP-N-acetylglucosamine--N-acetylmuramyl-(pentapeptide) pyrophosphoryl-undecaprenol N-acetylglucosamine transferase (365 aa).

Residues 13 to 15 (TGG), Asn125, Arg165, Ser192, and Gln293 each bind UDP-N-acetyl-alpha-D-glucosamine.

The protein belongs to the glycosyltransferase 28 family. MurG subfamily.

It localises to the cell inner membrane. The catalysed reaction is di-trans,octa-cis-undecaprenyl diphospho-N-acetyl-alpha-D-muramoyl-L-alanyl-D-glutamyl-meso-2,6-diaminopimeloyl-D-alanyl-D-alanine + UDP-N-acetyl-alpha-D-glucosamine = di-trans,octa-cis-undecaprenyl diphospho-[N-acetyl-alpha-D-glucosaminyl-(1-&gt;4)]-N-acetyl-alpha-D-muramoyl-L-alanyl-D-glutamyl-meso-2,6-diaminopimeloyl-D-alanyl-D-alanine + UDP + H(+). It functions in the pathway cell wall biogenesis; peptidoglycan biosynthesis. Functionally, cell wall formation. Catalyzes the transfer of a GlcNAc subunit on undecaprenyl-pyrophosphoryl-MurNAc-pentapeptide (lipid intermediate I) to form undecaprenyl-pyrophosphoryl-MurNAc-(pentapeptide)GlcNAc (lipid intermediate II). The protein is UDP-N-acetylglucosamine--N-acetylmuramyl-(pentapeptide) pyrophosphoryl-undecaprenol N-acetylglucosamine transferase of Ruegeria pomeroyi (strain ATCC 700808 / DSM 15171 / DSS-3) (Silicibacter pomeroyi).